We begin with the raw amino-acid sequence, 351 residues long: D-alanine--D-alanine ligase (351 aa).

The ATP-grasp domain occupies 135–344 (KMAFAQAGLP…FAELVDQLIQ (210 aa)). 171-226 (EQRLGYPCFVKPANLGSSVGIAKVRSRSELEKALDSAASYDRRIVIETGVKAREVE) is an ATP binding site. Mg(2+) is bound by residues Asp297, Glu311, and Asn313.

This sequence belongs to the D-alanine--D-alanine ligase family. Mg(2+) serves as cofactor. It depends on Mn(2+) as a cofactor.

The protein resides in the cytoplasm. It carries out the reaction 2 D-alanine + ATP = D-alanyl-D-alanine + ADP + phosphate + H(+). It participates in cell wall biogenesis; peptidoglycan biosynthesis. Its function is as follows. Cell wall formation. This is D-alanine--D-alanine ligase from Rippkaea orientalis (strain PCC 8801 / RF-1) (Cyanothece sp. (strain PCC 8801)).